A 154-amino-acid polypeptide reads, in one-letter code: Protein-export protein SecB (154 aa).

Belongs to the SecB family. As to quaternary structure, homotetramer, a dimer of dimers. One homotetramer interacts with 1 SecA dimer.

It localises to the cytoplasm. Its function is as follows. One of the proteins required for the normal export of preproteins out of the cell cytoplasm. It is a molecular chaperone that binds to a subset of precursor proteins, maintaining them in a translocation-competent state. It also specifically binds to its receptor SecA. This chain is Protein-export protein SecB, found in Buchnera aphidicola subsp. Schizaphis graminum (strain Sg).